The chain runs to 399 residues: Phosphoglycerate kinase (399 aa).

Substrate is bound by residues 22–24 (DFN), Arg37, 60–63 (HFGR), Arg118, and Arg151. Residues Lys201, Glu322, and 352–355 (GGDS) each bind ATP.

It belongs to the phosphoglycerate kinase family. Monomer.

The protein resides in the cytoplasm. The catalysed reaction is (2R)-3-phosphoglycerate + ATP = (2R)-3-phospho-glyceroyl phosphate + ADP. The protein operates within carbohydrate degradation; glycolysis; pyruvate from D-glyceraldehyde 3-phosphate: step 2/5. This chain is Phosphoglycerate kinase, found in Wolbachia sp. subsp. Brugia malayi (strain TRS).